The chain runs to 208 residues: Methionine-R-sulfoxide reductase B1 (208 aa).

The segment covering 27–36 has biased composition (basic and acidic residues); the sequence is QDSDNPDKRY. The segment at 27 to 48 is disordered; that stretch reads QDSDNPDKRYSGPAATMDNKSE. The region spanning 54 to 188 is the MsrB domain; the sequence is KEELRKRLTP…NSASIEFVNA (135 aa). Residues cysteine 93, cysteine 96, cysteine 154, and cysteine 157 each coordinate Zn(2+). A disulfide bridge connects residues cysteine 111 and cysteine 177. Cysteine 177 serves as the catalytic Nucleophile. The interval 189 to 208 is disordered; the sequence is DPATSSPPVATPTAAPIAQQ.

Belongs to the MsrB Met sulfoxide reductase family. Requires Zn(2+) as cofactor. As to expression, present in the embryonic nervous system (brain and cord) in neuronal cell bodies, along axons. Also present in embryonic muscles in motor axons. Localizes to growing bristle tips where it is distributed in small puntae. Present at and at sites of actin localization.

The protein localises to the cytoplasm. Its subcellular location is the nucleus. It localises to the cytoskeleton. It carries out the reaction L-methionyl-[protein] + [thioredoxin]-disulfide + H2O = L-methionyl-(R)-S-oxide-[protein] + [thioredoxin]-dithiol. Methionine-sulfoxide reductase that specifically reduces methionine (R)-sulfoxide back to methionine. While in many cases methionine oxidation is the result of random oxidation following oxidative stress, methionine oxidation is also a post-translational modification that takes place on specific residues. Acts as a regulator of actin assembly by reducing methionine (R)-sulfoxide mediated by Mical on actin thereby promoting filament repolymerization. This chain is Methionine-R-sulfoxide reductase B1 (SelR), found in Drosophila melanogaster (Fruit fly).